Consider the following 422-residue polypeptide: Probable biofilm formation methyltransferase WspC (422 aa).

A CheR-type methyltransferase domain is found at 1 to 264 (MNDRFERLLK…LSFVFRRTSE (264 aa)). Residues Thr-67, Arg-71, Glu-108, Asp-132, 186-187 (NL), and 205-206 (RN) contribute to the S-adenosyl-L-methionine site. The disordered stretch occupies residues 289 to 316 (ASIRPSPPPPAKPRQRLSSLVPPASGQP). Residues 354-387 (ATVFYWLGLLSDVAGQEQEAQDFYRKALYLEPQH) form a TPR repeat.

In terms of assembly, monomer.

Involved in biofilm formation. This Pseudomonas aeruginosa (strain ATCC 15692 / DSM 22644 / CIP 104116 / JCM 14847 / LMG 12228 / 1C / PRS 101 / PAO1) protein is Probable biofilm formation methyltransferase WspC (wspC).